Consider the following 134-residue polypeptide: Small ribosomal subunit protein uS11 (134 aa).

Disordered regions lie at residues 1–22 and 114–134; these read MPPK…KNVA and SIQD…RRRV. Positions 9–22 are enriched in basic residues; sequence AAKKVRRKEKKNVA.

The protein belongs to the universal ribosomal protein uS11 family. Part of the 30S ribosomal subunit. Interacts with proteins S7 and S18. Binds to IF-3.

Functionally, located on the platform of the 30S subunit, it bridges several disparate RNA helices of the 16S rRNA. Forms part of the Shine-Dalgarno cleft in the 70S ribosome. This is Small ribosomal subunit protein uS11 from Streptomyces coelicolor (strain ATCC BAA-471 / A3(2) / M145).